The primary structure comprises 323 residues: Thymidylate synthase (323 aa).

DUMP-binding positions include R21 and 172 to 173 (RR). C192 functions as the Nucleophile in the catalytic mechanism. Residues 214 to 217 (RSND), N225, and 255 to 257 (HVY) each bind dUMP. (6R)-5,10-methylene-5,6,7,8-tetrahydrofolate is bound at residue D217. A322 is a (6R)-5,10-methylene-5,6,7,8-tetrahydrofolate binding site.

This sequence belongs to the thymidylate synthase family. Bacterial-type ThyA subfamily. In terms of assembly, homodimer.

The protein localises to the cytoplasm. It catalyses the reaction dUMP + (6R)-5,10-methylene-5,6,7,8-tetrahydrofolate = 7,8-dihydrofolate + dTMP. The protein operates within pyrimidine metabolism; dTTP biosynthesis. Functionally, catalyzes the reductive methylation of 2'-deoxyuridine-5'-monophosphate (dUMP) to 2'-deoxythymidine-5'-monophosphate (dTMP) while utilizing 5,10-methylenetetrahydrofolate (mTHF) as the methyl donor and reductant in the reaction, yielding dihydrofolate (DHF) as a by-product. This enzymatic reaction provides an intracellular de novo source of dTMP, an essential precursor for DNA biosynthesis. This Bordetella parapertussis (strain 12822 / ATCC BAA-587 / NCTC 13253) protein is Thymidylate synthase.